Here is a 498-residue protein sequence, read N- to C-terminus: ATP synthase subunit alpha 1 (498 aa).

It belongs to the ATPase alpha/beta chains family. As to quaternary structure, F-type ATPases have 2 components, CF(1) - the catalytic core - and CF(0) - the membrane proton channel. CF(1) has five subunits: alpha(3), beta(3), gamma(1), delta(1), epsilon(1). CF(0) has three main subunits: a(1), b(2) and c(9-12). The alpha and beta chains form an alternating ring which encloses part of the gamma chain. CF(1) is attached to CF(0) by a central stalk formed by the gamma and epsilon chains, while a peripheral stalk is formed by the delta and b chains.

The protein resides in the cell membrane. It carries out the reaction ATP + H2O + 4 H(+)(in) = ADP + phosphate + 5 H(+)(out). Its function is as follows. Produces ATP from ADP in the presence of a proton gradient across the membrane. The alpha chain is a regulatory subunit. This Listeria monocytogenes serotype 4b (strain F2365) protein is ATP synthase subunit alpha 1.